The chain runs to 221 residues: Putative 5'(3')-deoxyribonucleotidase R824 (221 aa).

Asp-16 and Asp-18 together coordinate Mg(2+). Asp-18 serves as the catalytic Nucleophile. Residues Asp-18, Ser-103, and Lys-138 each coordinate phosphate. Asp-149 is a Mg(2+) binding site.

The protein belongs to the 5'(3')-deoxyribonucleotidase family. The cofactor is Mg(2+).

Functionally, dephosphorylates the 5' and 2'(3')-phosphates of deoxyribonucleotides. This is Putative 5'(3')-deoxyribonucleotidase R824 from Acanthamoeba polyphaga mimivirus (APMV).